Consider the following 427-residue polypeptide: 3-phosphoshikimate 1-carboxyvinyltransferase (427 aa).

Positions 22, 23, and 27 each coordinate 3-phosphoshikimate. K22 contributes to the phosphoenolpyruvate binding site. Residues G96 and R124 each coordinate phosphoenolpyruvate. 3-phosphoshikimate-binding residues include S169, S170, Q171, S197, D313, N336, and K340. Q171 serves as a coordination point for phosphoenolpyruvate. D313 acts as the Proton acceptor in catalysis. 3 residues coordinate phosphoenolpyruvate: R344, R386, and K411.

It belongs to the EPSP synthase family. In terms of assembly, monomer.

It is found in the cytoplasm. It catalyses the reaction 3-phosphoshikimate + phosphoenolpyruvate = 5-O-(1-carboxyvinyl)-3-phosphoshikimate + phosphate. It functions in the pathway metabolic intermediate biosynthesis; chorismate biosynthesis; chorismate from D-erythrose 4-phosphate and phosphoenolpyruvate: step 6/7. Catalyzes the transfer of the enolpyruvyl moiety of phosphoenolpyruvate (PEP) to the 5-hydroxyl of shikimate-3-phosphate (S3P) to produce enolpyruvyl shikimate-3-phosphate and inorganic phosphate. The polypeptide is 3-phosphoshikimate 1-carboxyvinyltransferase (Salmonella agona (strain SL483)).